Consider the following 287-residue polypeptide: Pyridoxal 5'-phosphate synthase subunit PdxS (287 aa).

Asp-21 is a D-ribose 5-phosphate binding site. Lys-78 acts as the Schiff-base intermediate with D-ribose 5-phosphate in catalysis. Gly-150 contacts D-ribose 5-phosphate. Arg-162 contributes to the D-glyceraldehyde 3-phosphate binding site. D-ribose 5-phosphate is bound by residues Gly-211 and 232–233 (GS).

The protein belongs to the PdxS/SNZ family. As to quaternary structure, in the presence of PdxT, forms a dodecamer of heterodimers.

It carries out the reaction aldehydo-D-ribose 5-phosphate + D-glyceraldehyde 3-phosphate + L-glutamine = pyridoxal 5'-phosphate + L-glutamate + phosphate + 3 H2O + H(+). The protein operates within cofactor biosynthesis; pyridoxal 5'-phosphate biosynthesis. Its function is as follows. Catalyzes the formation of pyridoxal 5'-phosphate from ribose 5-phosphate (RBP), glyceraldehyde 3-phosphate (G3P) and ammonia. The ammonia is provided by the PdxT subunit. Can also use ribulose 5-phosphate and dihydroxyacetone phosphate as substrates, resulting from enzyme-catalyzed isomerization of RBP and G3P, respectively. The chain is Pyridoxal 5'-phosphate synthase subunit PdxS from Tropheryma whipplei (strain TW08/27) (Whipple's bacillus).